The sequence spans 488 residues: Regulatory protein ViaA (488 aa).

The protein belongs to the ViaA family. In terms of assembly, homodimer. Interacts with RavA.

The protein resides in the cytoplasm. Component of the RavA-ViaA chaperone complex, which may act on the membrane to optimize the function of some of the respiratory chains. ViaA stimulates the ATPase activity of RavA. The protein is Regulatory protein ViaA of Yersinia enterocolitica serotype O:8 / biotype 1B (strain NCTC 13174 / 8081).